Consider the following 899-residue polypeptide: Translation initiation factor IF-2 (899 aa).

3 disordered regions span residues 116-135, 170-189, and 262-306; these read AKARAEQQAREAAEQKARLQ, RGGGTVKPAPKPAETLEQKK, and DREI…ANKH. Positions 399–568 constitute a tr-type G domain; it reads TRPPVVTIMG…LIQSELMELK (170 aa). Residues 408–415 form a G1 region; that stretch reads GHVDHGKT. A GTP-binding site is contributed by 408 to 415; that stretch reads GHVDHGKT. A G2 region spans residues 433-437; that stretch reads GITQH. Residues 454–457 form a G3 region; sequence DTPG. Residues 454-458 and 508-511 contribute to the GTP site; these read DTPGH and NKMD. The G4 stretch occupies residues 508 to 511; sequence NKMD. The interval 544–546 is G5; sequence SAH.

The protein belongs to the TRAFAC class translation factor GTPase superfamily. Classic translation factor GTPase family. IF-2 subfamily.

The protein localises to the cytoplasm. Its function is as follows. One of the essential components for the initiation of protein synthesis. Protects formylmethionyl-tRNA from spontaneous hydrolysis and promotes its binding to the 30S ribosomal subunits. Also involved in the hydrolysis of GTP during the formation of the 70S ribosomal complex. The polypeptide is Translation initiation factor IF-2 (Acinetobacter baumannii (strain AB307-0294)).